Here is a 346-residue protein sequence, read N- to C-terminus: L-malyl-CoA/beta-methylmalyl-CoA lyase (346 aa).

Residues E148 and D177 each contribute to the Mg(2+) site. Substrate-binding positions include 176–177 (VD) and 253–254 (LH).

This sequence belongs to the HpcH/HpaI aldolase family. Mg(2+) serves as cofactor. The cofactor is Mn(2+).

It catalyses the reaction (S)-malyl-CoA = glyoxylate + acetyl-CoA. The enzyme catalyses (2R,3S)-beta-methylmalyl-CoA = propanoyl-CoA + glyoxylate. Its function is as follows. Involved in the methylaspartate cycle. Catalyzes the reversible cleavage of beta-methylmalyl-CoA to propionyl-CoA and glyoxylate, as well as the reversible cleavage of (S)-malyl-CoA to acetyl-CoA and glyoxylate. In addition, it has a small malyl-CoA thioesterase activity. It can also catalyze the cleavage of (S)-citramalyl-CoA to acetyl-CoA and pyruvate. The polypeptide is L-malyl-CoA/beta-methylmalyl-CoA lyase (citE1) (Haloarcula marismortui (strain ATCC 43049 / DSM 3752 / JCM 8966 / VKM B-1809) (Halobacterium marismortui)).